The primary structure comprises 174 residues: UPF0340 protein SH0921 (174 aa).

The protein belongs to the UPF0340 family.

This is UPF0340 protein SH0921 from Staphylococcus haemolyticus (strain JCSC1435).